We begin with the raw amino-acid sequence, 909 residues long: MVAAPLLRAHQAARLQSVSTSRLGLNPHVIKSAGRLQLLRGSSFSTATSKWQAGVLDRTRNIGIIAHIDAGKTTTTERMLYYSGFTRRIGDVDEGSTVTDFLPAERARGITIQSAAITFHWPPQTAGDGNTTPQEPQTPRSASSHTVNLIDTPGHADFTFEVMRSLRILDGAVCILDGVAGVEAQTEQVWHQASTYRIPRIVYVNKLDRDGAAFGRTVREVASRLGGWPAVCQIPWFEGGNGRFTGIADAINLQGLRWEEGDGKSVKMFNLEQLASEEPQLAQELKRARVALVELLSEHDEAMVEKFFDCEEDHLAVPPNDILESLRRCLLEEQGRKIIPIFAGASFRNIGVQPLLDAVTNLLPSPPETPEPEVSIGGVKGGLRRLLSGDLLVEQGEKAASAKGKHKKKSAIQAESRNAIEKLQGCALAFKVVNDPKRGVLVYVRVYSGSLDRNSILYNTNLNVSERAPRLLKMYANDAVEVDSIPEGHIGVVAGLKHTRTGDTLVTYSGNKATPPEPLNTLQLRPITVPPPVFFASVEPHSLSEEKRLQESLAMLLREDPSLHVTVDEDSGQTLLSGMGELHLEIARDRLLNDLKAKASMGRIEIGYRECPLGASGPITKIFDKEIAGRKGKAGCTATVEPFDPEETTTEPDPSTLSIQTTDGNQIIIQAPGLEVEVNKKGIEESPLLPPGLDVHALRTALQNGCLAALARGPQFTFPMHGTRVTLTFNPAEHLFGNESTPSALSAAARLATSSALRDLPSGAGTSLMEPVMNVIISVDEASLGAVVHDISSSRGGHIISLDEETPLQTTGITSNPTDDLLPPIDPNKVYAPPDPFQSSTVGIDLPSSANRPRTITAKVPLKEMVGYLKHLRSLSAGRGTFVMSVDRFEKMSAPRQKAVLAELRGDFF.

A mitochondrion-targeting transit peptide spans methionine 1–leucine 15. The region spanning aspartate 57–proline 367 is the tr-type G domain. Alanine 66–threonine 73 is a binding site for GTP. The segment at tryptophan 121–asparagine 148 is disordered. The span at glycine 127–asparagine 148 shows a compositional bias: polar residues. Residues aspartate 151–histidine 155 and asparagine 205–aspartate 208 each bind GTP.

Belongs to the TRAFAC class translation factor GTPase superfamily. Classic translation factor GTPase family. EF-G/EF-2 subfamily.

Its subcellular location is the mitochondrion. In terms of biological role, mitochondrial GTPase that mediates the disassembly of ribosomes from messenger RNA at the termination of mitochondrial protein biosynthesis. Not involved in the GTP-dependent ribosomal translocation step during translation elongation. In Aspergillus flavus (strain ATCC 200026 / FGSC A1120 / IAM 13836 / NRRL 3357 / JCM 12722 / SRRC 167), this protein is Ribosome-releasing factor 2, mitochondrial (mef2).